The sequence spans 218 residues: Glutathione S-transferase Mu 4 (218 aa).

The region spanning 2-88 (SMTLGYWDIR…YIARKHNLCG (87 aa)) is the GST N-terminal domain. Residues 7 to 8 (YW), 46 to 50 (WLNEK), 59 to 60 (NL), and 72 to 73 (QS) each bind glutathione. The GST C-terminal domain maps to 90 to 208 (TEEEKIRVDI…KSSRFLPKPL (119 aa)). Tyr-116 contributes to the substrate binding site.

Belongs to the GST superfamily. Mu family. Homodimer. Expressed in a wide variety of tissues.

It localises to the cytoplasm. It catalyses the reaction RX + glutathione = an S-substituted glutathione + a halide anion + H(+). The catalysed reaction is 1-chloro-2,4-dinitrobenzene + glutathione = 2,4-dinitrophenyl-S-glutathione + chloride + H(+). It carries out the reaction (13S,14S)-epoxy-(4Z,7Z,9E,11E,16Z,19Z)-docosahexaenoate + glutathione = (13R)-S-glutathionyl-(14S)-hydroxy-(4Z,7Z,9E,11E,16Z,19Z)-docosahexaenoate. The enzyme catalyses leukotriene C4 = leukotriene A4 + glutathione. Functionally, conjugation of reduced glutathione to a wide number of exogenous and endogenous hydrophobic electrophiles. Catalyzes the conjugation of leukotriene A4 with reduced glutathione (GSH) to form leukotriene C4. Can also catalyze the transfer of a glutathionyl group from glutathione (GSH) to 13(S),14(S)-epoxy-docosahexaenoic acid to form maresin conjugate in tissue regeneration 1 (MCTR1), a bioactive lipid mediator that possess potent anti-inflammatory and proresolving actions. The protein is Glutathione S-transferase Mu 4 (GSTM4) of Homo sapiens (Human).